The chain runs to 492 residues: KAT8 regulatory NSL complex subunit 2 (492 aa).

A Glycyl lysine isopeptide (Lys-Gly) (interchain with G-Cter in SUMO2) cross-link involves residue lysine 78. The interval leucine 127 to lysine 182 is disordered. Threonine 131 is subject to Phosphothreonine. The segment covering serine 135–aspartate 144 has biased composition (basic and acidic residues). Phosphoserine occurs at positions 147, 149, 168, 172, and 175. A compositionally biased stretch (acidic residues) spans aspartate 167–glutamate 178. Residues aspartate 308–phenylalanine 364 form a required for interaction with other NSL complex members region. Residues alanine 455 to serine 492 form a disordered region.

Component of the NSL complex at least composed of KAT8/MOF, KANSL1, KANSL2, KANSL3, MCRS1, PHF20, OGT1/OGT, WDR5 and HCFC1.

The protein resides in the nucleus. Its subcellular location is the mitochondrion. Non-catalytic component of the NSL histone acetyltransferase complex, a multiprotein complex that mediates histone H4 acetylation at 'Lys-5'- and 'Lys-8' (H4K5ac and H4K8ac) at transcription start sites and promotes transcription initiation. Required for NSL complex stability and for transcription of intraciliary transport genes in both ciliated and non-ciliated cells by regulating histone H4 acetylation at 'Lys-5'- and 'Lys-12' (H4K5ac and H4K12ac). This is necessary for cilium assembly in ciliated cells and for organization of the microtubule cytoskeleton in non-ciliated cells. Required within the NSL complex to maintain nuclear architecture stability by promoting KAT8-mediated acetylation of lamin LMNA. This chain is KAT8 regulatory NSL complex subunit 2 (KANSL2), found in Pongo abelii (Sumatran orangutan).